A 1431-amino-acid chain; its full sequence is Trophinin (1431 aa).

Disordered stretches follow at residues 1–24, 341–365, and 401–433; these read MDRR…PGSL, SRAR…QGAQ, and PTTR…PWGR. Over residues 405–415 the composition is skewed to basic residues; it reads TRGKRNRKSKH. The MAGE domain maps to 444 to 642; sequence LQERANKLVK…KDWAVQYREA (199 aa). Tandem repeats lie at residues 751–760 and 769–778. The interval 751–1430 is 62 X 10 AA approximate tandem repeats; sequence FSGGPGITFG…ASLGACGFSY (680 aa). Residues 779 to 786 form a 3; approximate repeat; sequence GTLSTSSS. A run of 2 repeats spans residues 787–796 and 805–814. Residues 823–833 form a 6; approximate repeat; it reads FSGGVSSSFSG. Copy 7 of the repeat occupies 841–850; that stretch reads FSGGASSGFG. One copy of the 8; approximate repeat lies at 859–870; that stretch reads FSGVLSTSTSFG. Residues 879-890 form a 9; approximate repeat; it reads FSSALSTSTGFG. 5 repeat units span residues 901–910, 911–920, 921–930, 931–940, and 941–950. The stretch at 951–960 is one 15; approximate repeat; that stretch reads GTLSTSICFD. 6 consecutive repeat copies span residues 961–970, 971–980, 981–990, 991–1000, 1001–1010, and 1011–1020. One copy of the 22; approximate repeat lies at 1021-1030; the sequence is SALNTNAGYG. A run of 4 repeats spans residues 1031–1040, 1041–1050, 1051–1060, and 1061–1070. Residues 1071–1080 form a 27; approximate repeat; the sequence is CAVSTSASFS. The stretch at 1081 to 1090 is one 28; approximate repeat; that stretch reads GAVSTSACFS. Repeat copies occupy residues 1091–1100, 1101–1110, 1111–1120, 1121–1130, 1131–1140, 1141–1150, 1151–1160, and 1161–1170. Residues 1171 to 1180 form a 37; approximate repeat; sequence GPPSTSACFS. The stretch at 1181 to 1190 is one 38; approximate repeat; that stretch reads GATSPSFCDG. Repeat copies occupy residues 1191–1200, 1201–1210, and 1211–1220. Residues 1221–1230 form a 42; approximate repeat; that stretch reads GGLGTSAGFS. The stretch at 1231-1240 is one 43; approximate repeat; it reads GGLSTSSGFD. A run of 2 repeats spans residues 1241 to 1250 and 1251 to 1260. Residues 1261–1270 form a 46; approximate repeat; it reads GGLGTSAGFS. 3 tandem repeats follow at residues 1271-1280, 1281-1290, and 1291-1300. The 50; approximate repeat unit spans residues 1301-1310; sequence STLGTSAGFS. Residues 1311 to 1320 form repeat 51; it reads GGLSTSDGFG. One copy of the 52; approximate repeat lies at 1321-1330; that stretch reads SRPNASFDRG. A 53; approximate repeat occupies 1331 to 1340; the sequence is LSTIIGFGSG. The stretch at 1341-1350 is one 54; approximate repeat; it reads SNTSTGFTGE. A compositionally biased stretch (low complexity) spans 1342–1363; that stretch reads NTSTGFTGEPSTSTGFSSGPSS. The disordered stretch occupies residues 1342–1365; sequence NTSTGFTGEPSTSTGFSSGPSSIV. The 55; approximate repeat unit spans residues 1351–1360; it reads PSTSTGFSSG. Residues 1361-1370 form a 56; approximate repeat; it reads PSSIVGFSGG. Residues 1371 to 1380 form a 57; approximate repeat; that stretch reads PSTGVGFCSG. Residues 1381–1390 form a 58; approximate repeat; it reads PSTSGFSGGP. The stretch at 1391 to 1400 is one 59; approximate repeat; it reads STGAGFGGGP. The stretch at 1401–1410 is one 60; approximate repeat; the sequence is NTGAGFGGGP. A 61; approximate repeat occupies 1411 to 1420; that stretch reads STSAGFGSGA. One copy of the 62; approximate repeat lies at 1421–1430; that stretch reads ASLGACGFSY.

Directly binds bystin, and indirectly tastin. Strong expression at implantation sites. Found in the placenta from the sixth week of pregnancy. Was localized in the cytoplasm of the syncytiotrophoblast in the chorionic villi and in endometrial decidual cells at the uteroplacental interface. After week 10, the level decreased and then disappeared from placental villi. Also found in macrophages.

Functionally, could be involved with bystin and tastin in a cell adhesion molecule complex that mediates an initial attachment of the blastocyst to uterine epithelial cells at the time of the embryo implantation. Directly responsible for homophilic cell adhesion. This is Trophinin (TRO) from Homo sapiens (Human).